The following is a 181-amino-acid chain: Transmembrane protein 47 (181 aa).

N-acetylalanine is present on alanine 2. 4 helical membrane passes run 21-41 (LVGL…VLSP), 83-103 (ALLL…LISI), 115-135 (VAVM…LYPI), and 152-172 (GYGL…LYCL).

Belongs to the TMEM47 family. In terms of assembly, interacts with CTNNB1, CTNNA1, PRKCI, PARD6B. Interacts with FYB1. In terms of tissue distribution, expressed in podocytes (at protein level).

It is found in the membrane. It localises to the cell junction. The protein resides in the adherens junction. Functionally, regulates cell junction organization in epithelial cells. May play a role in the transition from adherens junction to tight junction assembly. May regulate F-actin polymerization required for tight junctional localization dynamics and affect the junctional localization of PARD6B. During podocyte differentiation may negatively regulate activity of FYN and subsequently the abundance of nephrin. In Mus musculus (Mouse), this protein is Transmembrane protein 47 (Tmem47).